Consider the following 367-residue polypeptide: DNA replication and repair protein RecF (367 aa).

30 to 37 (GANGSGKT) contributes to the ATP binding site.

The protein belongs to the RecF family.

The protein localises to the cytoplasm. Functionally, the RecF protein is involved in DNA metabolism; it is required for DNA replication and normal SOS inducibility. RecF binds preferentially to single-stranded, linear DNA. It also seems to bind ATP. In Pseudomonas putida (strain GB-1), this protein is DNA replication and repair protein RecF.